The sequence spans 311 residues: MNKYLKYFSGTLVGLMLSTSAFAAAEYAVVLKTLSNPFWVDMKKGIEDEAKTLGVSVDIFASPSEGDFQSQLQLFEDLSNKNYKGIAFAPLSSVNLVMPVARAWKKGIYLVNLDEKIDMDNLKKAGGNVEAFVTTDNVAVGAKGASFIIDKLGAEGGEVAIIEGKAGNASGEARRNGATEAFKKASQIKLVASQPADWDRIKALDVATNVLQRNPNIKAIYCANDTMAMGVAQAVANAGKTGKVLVVGTDGIPEARKMVEAGQMTATVAQNPADIGATGLKLMVDAEKSGKVIPLDKAPEFKLVDSILVTQ.

An N-terminal signal peptide occupies residues 1–23 (MNKYLKYFSGTLVGLMLSTSAFA).

This sequence belongs to the bacterial solute-binding protein 2 family.

Its subcellular location is the periplasm. Its function is as follows. Part of the binding-protein-dependent transport system AlsBAC for D-allose. The polypeptide is D-allose-binding periplasmic protein (alsB) (Escherichia coli (strain K12)).